We begin with the raw amino-acid sequence, 204 residues long: MIGKLKGTLEHIFEDYIVLDVHGVGYVVFISNRLRPSLPSVGEALSLFIETHVREEAIRLFGFATRAEQEWFCMLQNVPGVGAKVALAILGTLSPDELAQAIALNDVAMISRAPGVGKKVSERIVGELKSKTLPFEQAVKTVSVPQREITHQPAHDALSALMKLGFEREQAARALALAMNALEGEAVSSALLIRHSLKLLSSPT.

The domain I stretch occupies residues 1-64; sequence MIGKLKGTLE…EEAIRLFGFA (64 aa). The segment at 65 to 143 is domain II; that stretch reads TRAEQEWFCM…PFEQAVKTVS (79 aa). Positions 144–154 are flexible linker; sequence VPQREITHQPA. The tract at residues 154-204 is domain III; sequence AHDALSALMKLGFEREQAARALALAMNALEGEAVSSALLIRHSLKLLSSPT.

It belongs to the RuvA family. As to quaternary structure, homotetramer. Forms an RuvA(8)-RuvB(12)-Holliday junction (HJ) complex. HJ DNA is sandwiched between 2 RuvA tetramers; dsDNA enters through RuvA and exits via RuvB. An RuvB hexamer assembles on each DNA strand where it exits the tetramer. Each RuvB hexamer is contacted by two RuvA subunits (via domain III) on 2 adjacent RuvB subunits; this complex drives branch migration. In the full resolvosome a probable DNA-RuvA(4)-RuvB(12)-RuvC(2) complex forms which resolves the HJ.

It is found in the cytoplasm. The RuvA-RuvB-RuvC complex processes Holliday junction (HJ) DNA during genetic recombination and DNA repair, while the RuvA-RuvB complex plays an important role in the rescue of blocked DNA replication forks via replication fork reversal (RFR). RuvA specifically binds to HJ cruciform DNA, conferring on it an open structure. The RuvB hexamer acts as an ATP-dependent pump, pulling dsDNA into and through the RuvAB complex. HJ branch migration allows RuvC to scan DNA until it finds its consensus sequence, where it cleaves and resolves the cruciform DNA. The polypeptide is Holliday junction branch migration complex subunit RuvA (Bartonella tribocorum (strain CIP 105476 / IBS 506)).